Consider the following 768-residue polypeptide: Telomere repeats-binding bouquet formation protein 1 (768 aa).

ARM repeat units follow at residues Glu-101–Gly-145 and Asn-341–Ser-384. Positions Glu-399–Asn-448 form a coiled coil. Basic and acidic residues-rich tracts occupy residues Gly-422–Asp-436 and Arg-461–Ser-475. 2 disordered regions span residues Gly-422–Met-441 and Ala-454–Ser-475. Positions Gln-524–Pro-700 are interaction with TERF1. A Phosphothreonine modification is found at Thr-648. The region spanning Lys-707–Ile-760 is the Myb-like domain.

This sequence belongs to the TERB1 family. Component of the MAJIN-TERB1-TERB2 complex, composed of MAJIN, TERB1 and TERB2. Interacts with TERF1, STAG3 and SUN1. Interacts (via Myb-like domain) with the cohesin complex; probably mediated via interaction with STAG3. In terms of processing, phosphorylated by CDK. Phosphorylation by CDK takes place in late prophase when the cap exchange is prominent. is important for the stabilization of telomere attachment but dispenable for the cap exchange. Expressed in testis and fetal oocytes.

It is found in the chromosome. Its subcellular location is the telomere. The protein localises to the nucleus inner membrane. In terms of biological role, meiosis-specific telomere-associated protein involved in meiotic telomere attachment to the nucleus inner membrane, a crucial step for homologous pairing and synapsis. Component of the MAJIN-TERB1-TERB2 complex, which promotes telomere cap exchange by mediating attachment of telomeric DNA to the inner nuclear membrane and replacement of the protective cap of telomeric chromosomes: in early meiosis, the MAJIN-TERB1-TERB2 complex associates with telomeric DNA and the shelterin/telosome complex. During prophase, the complex matures and promotes release of the shelterin/telosome complex from telomeric DNA. In the MAJIN-TERB1-TERB2 complex, TERB1 probably mediates association with the shelterin/telosome complex via interaction with TERF1, promoting priming telomeric DNA attachment'. Promotes telomere association with the nuclear envelope and deposition of the SUN-KASH/LINC complex. Also recruits cohesin to telomeres to develop structural rigidity. The protein is Telomere repeats-binding bouquet formation protein 1 of Mus musculus (Mouse).